The sequence spans 465 residues: Cysteine--tRNA ligase (465 aa).

Residue Cys-27 participates in Zn(2+) binding. Residues 29-39 carry the 'HIGH' region motif; it reads PTVYDDAHLGH. Residues 153–173 are disordered; it reads DISHKVSDDDTQSRVEHNSEK. Zn(2+) contacts are provided by Cys-208, His-237, and Glu-241. The 'KMSKS' region signature appears at 269–273; that stretch reads KMSKS. Lys-272 lines the ATP pocket.

This sequence belongs to the class-I aminoacyl-tRNA synthetase family. As to quaternary structure, monomer. Zn(2+) is required as a cofactor.

The protein resides in the cytoplasm. It catalyses the reaction tRNA(Cys) + L-cysteine + ATP = L-cysteinyl-tRNA(Cys) + AMP + diphosphate. The chain is Cysteine--tRNA ligase from Sulfurovum sp. (strain NBC37-1).